Reading from the N-terminus, the 308-residue chain is Porphobilinogen deaminase (308 aa).

Cysteine 241 is subject to S-(dipyrrolylmethanemethyl)cysteine.

The protein belongs to the HMBS family. As to quaternary structure, monomer. Dipyrromethane is required as a cofactor.

The enzyme catalyses 4 porphobilinogen + H2O = hydroxymethylbilane + 4 NH4(+). The protein operates within porphyrin-containing compound metabolism; protoporphyrin-IX biosynthesis; coproporphyrinogen-III from 5-aminolevulinate: step 2/4. In terms of biological role, tetrapolymerization of the monopyrrole PBG into the hydroxymethylbilane pre-uroporphyrinogen in several discrete steps. In Staphylococcus aureus (strain Newman), this protein is Porphobilinogen deaminase.